We begin with the raw amino-acid sequence, 198 residues long: Photosystem I assembly protein Ycf4 (198 aa).

Residues 1 to 20 (MTASTTINKGDSPNGDSSAS) form a disordered region. The next 2 helical transmembrane spans lie at 36–58 (YWWA…SSYL) and 78–100 (LVMG…VILW).

This sequence belongs to the Ycf4 family.

The protein resides in the cellular thylakoid membrane. Its function is as follows. Seems to be required for the assembly of the photosystem I complex. The protein is Photosystem I assembly protein Ycf4 of Nostoc sp. (strain PCC 7120 / SAG 25.82 / UTEX 2576).